A 533-amino-acid chain; its full sequence is DNA-directed RNA polymerase III subunit RPC3 (533 aa).

Positions 162-181 (LVPDTDSSDRGPPPPAPTLV) are disordered. At serine 194 the chain carries Phosphoserine. The tract at residues 197–228 (GKGKRRRSSDEDATGEPKAKKPRYTDNKEPSP) is disordered. Residues 211–227 (GEPKAKKPRYTDNKEPS) are compositionally biased toward basic and acidic residues.

It belongs to the eukaryotic RPC3/POLR3C RNA polymerase subunit family. Component of the RNA polymerase III complex consisting of 17 subunits: a ten-subunit horseshoe-shaped catalytic core composed of POLR3A/RPC1, POLR3B/RPC2, POLR1C/RPAC1, POLR1D/RPAC2, POLR3K/RPC10, POLR2E/RPABC1, POLR2F/RPABC2, POLR2H/RPABC3, POLR2K/RPABC4 and POLR2L/RPABC5; a mobile stalk composed of two subunits POLR3H/RPC8 and CRCP/RPC9, protruding from the core and functioning primarily in transcription initiation; and additional subunits homologous to general transcription factors of the RNA polymerase II machinery, POLR3C/RPC3-POLR3F/RPC6-POLR3G/RPC7 heterotrimer required for transcription initiation and POLR3D/RPC4-POLR3E/RPC5 heterodimer involved in both transcription initiation and termination. Directly interacts with POLR3G/RPC7 and POLR3GL. Directly interacts with POLR3F/RPC6. Interacts with GTF3C4. As part of the RNA polymerase III complex, interacts with PKP2.

The protein resides in the nucleus. DNA-dependent RNA polymerase catalyzes the transcription of DNA into RNA using the four ribonucleoside triphosphates as substrates. Specific peripheric component of RNA polymerase III (Pol III) which synthesizes small non-coding RNAs including 5S rRNA, snRNAs, tRNAs and miRNAs from at least 500 distinct genomic loci. Part of POLR3C/RPC3-POLR3F/RPC6-POLR3G/RPC7 heterotrimer, coordinates the dynamics of Pol III stalk and clamp modules during the transition from apo to elongation state. Pol III plays a key role in sensing and limiting infection by intracellular bacteria and DNA viruses. Acts as a nuclear and cytosolic DNA sensor involved in innate immune response. Can sense non-self dsDNA that serves as template for transcription into dsRNA. The non-self RNA polymerase III transcripts, such as Epstein-Barr virus-encoded RNAs (EBERs) induce type I interferon and NF-kappa-B through the RIG-I pathway. Preferentially binds single-stranded DNA (ssDNA) in a sequence-independent manner. This chain is DNA-directed RNA polymerase III subunit RPC3, found in Mus musculus (Mouse).